We begin with the raw amino-acid sequence, 958 residues long: MLGAIAKKIFGSSNDRRVKGYRPRVAAINALEPEMEALSDEALRARTDALKAEVAAGKSLDDILVPAFATVREAAKRVLGQRHFDVQLIGGMVLHEGGIAEMKTGEGKTLVATLATYLNALAGQGVHVVTVNDYLARRDAEWMGRVYGFLGLSTGIIVHGLDDAERKAAYACDITYGTNNEYGFDYLRDNMKYELGQMVQRGHAFAIVDEVDSILIDEARTPLIISGPIDDRSDLYVAIDALMPRLAREDYDLDEKQRTVSLTESGNEHIEELLREAGVLREGDLYDAHNITIVHHVNQALRAHTLFTRDKDYIVRNDEVVIIDEFTGRMMPGRRYSEGLHQALEAKERVTIQPENQTLASITFQNYFRLYKKLAGMTGTASTEADEFQEIYNLGVVEIPTNRPVERVDEDDEVYRTAEEKYAAIIAEIDKAHARHQPVLVGTGSIERSEHIAALLERHGYRPLDYSNLSAMEEVYAAAREGRVTKRFAVLNARFHEQEAYIVAQAGVPGAITIATNMAGRGTDIKLGGNVEMRVAQELAEVPEGPERQARVDAIRREIDENRAQVLASGEPADPEAGRKSALPGGLYIVGTERNESRRIDNQLRGRSGRQGDPGRSKFYLSLQDDLMRIFGSDRMDGMLQKLGLEQGEAIIHPWINKAIAKAQQKVEARNFDMRKNVLKYDNVMNDQRKVVFEQRREFMAQESVRETVDEMRHGVVDDVVAQHIPEDAYPEQWDVAGLREAIGAQLNLDVPVEDWAKEEGIADEEIRDRLRKAADEGYAARVERNGPDLMAYVEKQVLLQSLDHLWREHLVTLDHLRQVIGWRGIAQRDPLNEYKSEAFELFNGLIGSLREQVTGQLMRIEIMMQEPEAPSLPPMFAQHLDPVTGENEFALPQGSGSFGGGGGAFGYAAQDLSADAAVLERDPTDASTWGRVGRNEPCPCGSGKKYKHCHGRFSGEA.

ATP-binding positions include Gln87, 105–109, and Asp524; that span reads GEGKT. Residues 598-617 are disordered; that stretch reads RRIDNQLRGRSGRQGDPGRS. Residues Cys939, Cys941, Cys950, and His951 each coordinate Zn(2+).

The protein belongs to the SecA family. In terms of assembly, monomer and homodimer. Part of the essential Sec protein translocation apparatus which comprises SecA, SecYEG and auxiliary proteins SecDF-YajC and YidC. The cofactor is Zn(2+).

The protein localises to the cell inner membrane. The protein resides in the cytoplasm. It catalyses the reaction ATP + H2O + cellular proteinSide 1 = ADP + phosphate + cellular proteinSide 2.. Functionally, part of the Sec protein translocase complex. Interacts with the SecYEG preprotein conducting channel. Has a central role in coupling the hydrolysis of ATP to the transfer of proteins into and across the cell membrane, serving both as a receptor for the preprotein-SecB complex and as an ATP-driven molecular motor driving the stepwise translocation of polypeptide chains across the membrane. This is Protein translocase subunit SecA from Methylobacterium sp. (strain 4-46).